The following is a 621-amino-acid chain: tRNA uridine 5-carboxymethylaminomethyl modification enzyme MnmG (621 aa).

11-16 contributes to the FAD binding site; the sequence is GAGHAG. 271–285 contributes to the NAD(+) binding site; the sequence is GPRYCPSVEDKINRF.

It belongs to the MnmG family. Homodimer. Heterotetramer of two MnmE and two MnmG subunits. Requires FAD as cofactor.

The protein resides in the cytoplasm. In terms of biological role, NAD-binding protein involved in the addition of a carboxymethylaminomethyl (cmnm) group at the wobble position (U34) of certain tRNAs, forming tRNA-cmnm(5)s(2)U34. This is tRNA uridine 5-carboxymethylaminomethyl modification enzyme MnmG from Cytophaga hutchinsonii (strain ATCC 33406 / DSM 1761 / CIP 103989 / NBRC 15051 / NCIMB 9469 / D465).